Consider the following 237-residue polypeptide: 3-oxoacyl-[acyl-carrier-protein] reductase (237 aa).

An N-acetylmethionine modification is found at Met-1. NADP(+)-binding positions include 11-14 (SRGI), 34-35 (RN), Asp-56, and 83-85 (AAG). Residue Ser-135 participates in substrate binding. NADP(+)-binding positions include Tyr-148, Lys-152, and 181-183 (IHT). The Proton acceptor role is filled by Tyr-148. An N6-acetyllysine modification is found at Lys-195.

Belongs to the short-chain dehydrogenases/reductases (SDR) family. Homotetramer (in vitro). Heterotetramer with HSD17B8; contains two molecules each of HSD17B8 and CBR4. Does not form homotetramers when HSD17B8 is coexpressed, only heterotetramers (in vitro).

The protein localises to the mitochondrion matrix. The enzyme catalyses a (3R)-hydroxyacyl-[ACP] + NADP(+) = a 3-oxoacyl-[ACP] + NADPH + H(+). It carries out the reaction a quinone + NADPH + H(+) = a quinol + NADP(+). It participates in lipid metabolism; fatty acid biosynthesis. In terms of biological role, component of the heterotetramer complex KAR (3-ketoacyl-[acyl carrier protein] reductase or 3-ketoacyl-[ACP] reductase) that forms part of the mitochondrial fatty acid synthase (mtFAS). Beta-subunit of the KAR heterotetramer complex, responsible for the 3-ketoacyl-ACP reductase activity of the mtFAS, reduces 3-oxoacyl-[ACP] to (3R)-hydroxyacyl-[ACP] in a NADPH-dependent manner with no chain length preference, thereby participating in mitochondrial fatty acid biosynthesis. The homotetramer has NADPH-dependent quinone reductase activity (in vitro), hence could play a role in protection against cytotoxicity of exogenous quinones. As a heterotetramer, it can also reduce 9,10-phenanthrenequinone, 1,4-benzoquinone and various other o-quinones and p-quinones (in vitro). This is 3-oxoacyl-[acyl-carrier-protein] reductase (CBR4) from Bos taurus (Bovine).